The primary structure comprises 426 residues: Lactate racemase (426 aa).

Residue 72–75 (DHTR) coordinates Ni(II)-pyridinium-3,5-bisthiocarboxylate mononucleotide. Residues His-108 and His-174 each act as proton donor/acceptor in the active site. 2 residues coordinate Ni(II)-pyridinium-3,5-bisthiocarboxylate mononucleotide: Lys-184 and His-200. 2 residues coordinate substrate: Gln-295 and Lys-298.

This sequence belongs to the lactate racemase family. As to quaternary structure, homodimer. The cofactor is Ni(II)-pyridinium-3,5-bisthiocarboxylate mononucleotide.

The catalysed reaction is (S)-lactate = (R)-lactate. Its activity is regulated as follows. Activation of the apo-enzyme requires the three accessory proteins LarB, LarE and LarC, that are involved in the biosynthesis of the nickel-pincer cofactor of LarA. Its function is as follows. Catalyzes the interconversion between the D- and L-isomers of lactate. In Thermoanaerobacterium thermosaccharolyticum (strain ATCC 7956 / DSM 571 / NCIMB 9385 / NCA 3814 / NCTC 13789 / WDCM 00135 / 2032) (Clostridium thermosaccharolyticum), this protein is Lactate racemase.